The sequence spans 280 residues: Succinate dehydrogenase [ubiquinone] iron-sulfur subunit, mitochondrial (280 aa).

Residues 1–28 (MAAVVALSLRRRFPAAALGGARLQACRG) constitute a mitochondrion transit peptide. Positions 40–133 (KKFAIYRWDP…VSKIYPLPHM (94 aa)) constitute a 2Fe-2S ferredoxin-type domain. 2 positions are modified to N6-acetyllysine: Lys-51 and Lys-55. The [2Fe-2S] cluster site is built by Cys-93, Cys-98, Cys-101, and Cys-113. The interval 146 to 218 (FYAQYKSIEP…PAVLMQAYRW (73 aa)) is interaction with SDHAF1. Positions 176–206 (DREKLDGLYECILCACCSTSCPSYWWNGDKY) constitute a 4Fe-4S ferredoxin-type domain. [4Fe-4S] cluster-binding residues include Cys-186, Cys-189, and Cys-192. Cys-196 provides a ligand contact to [3Fe-4S] cluster. A ubiquinone is bound at residue Trp-201. Positions 243 and 249 each coordinate [3Fe-4S] cluster. Residue Cys-253 participates in [4Fe-4S] cluster binding.

It belongs to the succinate dehydrogenase/fumarate reductase iron-sulfur protein family. Component of complex II composed of four subunits: the flavoprotein (FP) SDHA, iron-sulfur protein (IP) SDHB, and a cytochrome b560 composed of SDHC and SDHD. Interacts with SDHAF1; the interaction is required for iron-sulfur cluster incorporation into SDHB. It depends on [2Fe-2S] cluster as a cofactor. [3Fe-4S] cluster serves as cofactor. [4Fe-4S] cluster is required as a cofactor.

The protein resides in the mitochondrion inner membrane. The enzyme catalyses a quinone + succinate = fumarate + a quinol. It catalyses the reaction (R)-malate + a quinone = enol-oxaloacetate + a quinol. The catalysed reaction is (S)-malate + a quinone = enol-oxaloacetate + a quinol. It functions in the pathway carbohydrate metabolism; tricarboxylic acid cycle; fumarate from succinate (eukaryal route): step 1/1. With respect to regulation, enol-oxaloacetate inhibits the succinate dehydrogenase activity. Iron-sulfur protein (IP) subunit of the succinate dehydrogenase complex (mitochondrial respiratory chain complex II), responsible for transferring electrons from succinate to ubiquinone (coenzyme Q). SDH also oxidizes malate to the non-canonical enol form of oxaloacetate, enol-oxaloacetate. Enol-oxaloacetate, which is a potent inhibitor of the succinate dehydrogenase activity, is further isomerized into keto-oxaloacetate. The polypeptide is Succinate dehydrogenase [ubiquinone] iron-sulfur subunit, mitochondrial (SDHB) (Bos taurus (Bovine)).